A 198-amino-acid polypeptide reads, in one-letter code: ATP synthase subunit delta (198 aa).

The protein belongs to the ATPase delta chain family. F-type ATPases have 2 components, F(1) - the catalytic core - and F(0) - the membrane proton channel. F(1) has five subunits: alpha(3), beta(3), gamma(1), delta(1), epsilon(1). F(0) has three main subunits: a(1), b(2) and c(10-14). The alpha and beta chains form an alternating ring which encloses part of the gamma chain. F(1) is attached to F(0) by a central stalk formed by the gamma and epsilon chains, while a peripheral stalk is formed by the delta and b chains.

The protein localises to the cell inner membrane. F(1)F(0) ATP synthase produces ATP from ADP in the presence of a proton or sodium gradient. F-type ATPases consist of two structural domains, F(1) containing the extramembraneous catalytic core and F(0) containing the membrane proton channel, linked together by a central stalk and a peripheral stalk. During catalysis, ATP synthesis in the catalytic domain of F(1) is coupled via a rotary mechanism of the central stalk subunits to proton translocation. Its function is as follows. This protein is part of the stalk that links CF(0) to CF(1). It either transmits conformational changes from CF(0) to CF(1) or is implicated in proton conduction. This is ATP synthase subunit delta from Gluconacetobacter diazotrophicus (strain ATCC 49037 / DSM 5601 / CCUG 37298 / CIP 103539 / LMG 7603 / PAl5).